The sequence spans 67 residues: Probable Sec-independent protein translocase protein TatE (67 aa).

A helical membrane pass occupies residues 4 to 21 (ISITKLLVVAALIVLVFG). The interval 43 to 67 (MNDDDTSVKKSAEEDVPADKISHKE) is disordered.

It belongs to the TatA/E family. TatE subfamily.

It localises to the cell inner membrane. Part of the twin-arginine translocation (Tat) system that transports large folded proteins containing a characteristic twin-arginine motif in their signal peptide across membranes. TatE shares overlapping functions with TatA. The polypeptide is Probable Sec-independent protein translocase protein TatE (Enterobacter lignolyticus (strain SCF1)).